A 62-amino-acid polypeptide reads, in one-letter code: Alpha-toxin Tf4 (62 aa).

One can recognise an LCN-type CS-alpha/beta domain in the interval 2 to 62 (KEGYPADSKG…SVWDSATNKC (61 aa)). 4 disulfide bridges follow: C12-C62, C16-C38, C24-C43, and C28-C45. C62 bears the Cysteine amide mark.

As to expression, expressed by the venom gland.

It is found in the secreted. In terms of biological role, alpha toxins bind voltage-independently at site-3 of sodium channels (Nav) and inhibit the inactivation of the activated channels, thereby blocking neuronal transmission. This toxin is toxic to frogs but non-toxic to insect larvae (T.molitor), mammals (rats) and crustaceans (crabs) at the doses assayed. This is Alpha-toxin Tf4 from Tityus fasciolatus (Central Brazilian scorpion).